Consider the following 284-residue polypeptide: 2-dehydro-3-deoxyphosphooctonate aldolase (284 aa).

The protein belongs to the KdsA family.

The protein localises to the cytoplasm. The enzyme catalyses D-arabinose 5-phosphate + phosphoenolpyruvate + H2O = 3-deoxy-alpha-D-manno-2-octulosonate-8-phosphate + phosphate. Its pathway is carbohydrate biosynthesis; 3-deoxy-D-manno-octulosonate biosynthesis; 3-deoxy-D-manno-octulosonate from D-ribulose 5-phosphate: step 2/3. It participates in bacterial outer membrane biogenesis; lipopolysaccharide biosynthesis. The sequence is that of 2-dehydro-3-deoxyphosphooctonate aldolase from Escherichia coli O6:H1 (strain CFT073 / ATCC 700928 / UPEC).